Here is a 216-residue protein sequence, read N- to C-terminus: Phosphoribosylaminoimidazole-succinocarboxamide synthase (216 aa).

Belongs to the SAICAR synthetase family.

The enzyme catalyses 5-amino-1-(5-phospho-D-ribosyl)imidazole-4-carboxylate + L-aspartate + ATP = (2S)-2-[5-amino-1-(5-phospho-beta-D-ribosyl)imidazole-4-carboxamido]succinate + ADP + phosphate + 2 H(+). Its pathway is purine metabolism; IMP biosynthesis via de novo pathway; 5-amino-1-(5-phospho-D-ribosyl)imidazole-4-carboxamide from 5-amino-1-(5-phospho-D-ribosyl)imidazole-4-carboxylate: step 1/2. This is Phosphoribosylaminoimidazole-succinocarboxamide synthase (purC) from Aquifex aeolicus (strain VF5).